The following is a 121-amino-acid chain: Small ribosomal subunit protein uS13 (121 aa).

The tract at residues 95–121 (GLPVRGQKTKTNARTRKGKRKTVGAKS) is disordered.

This sequence belongs to the universal ribosomal protein uS13 family. Part of the 30S ribosomal subunit. Forms a loose heterodimer with protein S19. Forms two bridges to the 50S subunit in the 70S ribosome.

In terms of biological role, located at the top of the head of the 30S subunit, it contacts several helices of the 16S rRNA. In the 70S ribosome it contacts the 23S rRNA (bridge B1a) and protein L5 of the 50S subunit (bridge B1b), connecting the 2 subunits; these bridges are implicated in subunit movement. Contacts the tRNAs in the A and P-sites. This Campylobacter jejuni subsp. jejuni serotype O:6 (strain 81116 / NCTC 11828) protein is Small ribosomal subunit protein uS13.